Consider the following 340-residue polypeptide: Cathepsin S (340 aa).

The signal sequence occupies residues 1–17 (MRAPGHAAIRWLFWMPL). Residues 18 to 122 (VCSVAMEQLQ…VTFRSYSNRT (105 aa)) constitute a propeptide, activation peptide. N-linked (GlcNAc...) asparagine glycosylation occurs at Asn120. Cystine bridges form between Cys134–Cys233, Cys144–Cys189, Cys178–Cys222, and Cys281–Cys329. Cys147 is an active-site residue. Catalysis depends on residues His287 and Asn307.

This sequence belongs to the peptidase C1 family. In terms of tissue distribution, widely expressed with highest expression found in non-skeletal tissues. Relatively high levels found in skeletal tissues. Expressed in spleen, B cells, dendritic cells and macrophages.

It is found in the lysosome. The protein localises to the secreted. Its subcellular location is the cytoplasmic vesicle. The protein resides in the phagosome. The enzyme catalyses Similar to cathepsin L, but with much less activity on Z-Phe-Arg-|-NHMec, and more activity on the Z-Val-Val-Arg-|-Xaa compound.. Its function is as follows. Thiol protease. Key protease responsible for the removal of the invariant chain from MHC class II molecules and MHC class II antigen presentation. The bond-specificity of this proteinase is in part similar to the specificities of cathepsin L. This chain is Cathepsin S (Ctss), found in Mus musculus (Mouse).